The following is a 179-amino-acid chain: Large ribosomal subunit protein uL5c (179 aa).

Belongs to the universal ribosomal protein uL5 family. In terms of assembly, part of the 50S ribosomal subunit; contacts the 5S rRNA.

The protein resides in the plastid. It localises to the chloroplast. In terms of biological role, binds 5S rRNA, forms part of the central protuberance of the 50S subunit. This chain is Large ribosomal subunit protein uL5c (rpl5), found in Gracilaria tenuistipitata var. liui (Red alga).